The sequence spans 936 residues: MAQVAVTTQPTDEPSDGRMVVTFLMSALESMCKELAKSKAEVACIAVYETDVYVVGTERGCAFVNARQDLQKDFAQHCQGEGLPEEKPLCLGNGEACPGEAQLLRRAVQDHFCLCYRKALGTTAMVPVPYEQMLQDEAAVVVRGLPEGLAFQHPDNYSLATLKWILENKAGISFAVKRPFLGAESQLGGLGMVTDAGRPTVPPNDSYGPVSVKTEPMEDSGTSPRAAAMLIKTESEDPNYNVCNVQGSQHFSASSDVTGMELPSEESTRMVALETNEDPETEVKMEGNASPSNLVNSAAGVEDLRIIQVTVADNEKERLSGLEKIKQLREQVNDLFSRKFGEAIGVDFPVKVPYRKITFNPGCVVIDGMPPGVVFKAPGYLEISSMRRILDAADFIKFTVIRPLPGLELSNVGKRKIDQEGRVFQEKWERAYFFVEVQNIPTCLICKQSVSVSKEYNLRRHYQTNHSRHYDQYSGQAREEKLRELKRGLRKYLLGASEIVCPEQPFPNASPPTNSAVQPAEEVAGSLWEKLRQKIRSFVAYSIAIDEITDINDTTQLAIFIRGVDDNFDVSEELLDTVPMTGAKSGNEIFLRVEKSLKKFSIDWSKLVSVASTGTPAMMDANSGLVTKLRARAASCCKGADLKSVRCIIHPEWLCAQKLRMGHVMDVVVDSVNWICSRGLNHGDFTTLLYELDSQYGSLLYHTALKWLGRGLVLRRFFESLEEIDSFMSSRGKPVPQLSSRDWILDLAFLVDMTTHLNTLDASLQGHSQIVTQMYDFIRAFLAKLCLWETHLARNNLAHFPTLKSVSRSESDGLNYIPKIVELKAEFQRRLSDFKSCESELTLFSSPFSTTIDSVREELQMEVIDLQCNTVLRTKYDKVGVPDFYKHLWSSYPKYRSHCARMLSMFSSTHICEQLFSILKLSKKEAQWGAALQVAT.

The stretch at 95–189 is one GTF2I-like 1 repeat; the sequence is EACPGEAQLL…FLGAESQLGG (95 aa). A disordered region spans residues 199–222; that stretch reads PTVPPNDSYGPVSVKTEPMEDSGT. Residues 319–413 form a GTF2I-like 2 repeat; it reads LSGLEKIKQL…LPGLELSNVG (95 aa).

It belongs to the TFII-I family. In terms of tissue distribution, ubiquitous.

It localises to the nucleus. This Mus musculus (Mouse) protein is General transcription factor II-I repeat domain-containing protein 2 (Gtf2ird2).